A 137-amino-acid chain; its full sequence is MAKELNPTENIEKLTDIQRHVTQLRGTEAPFSGKLLHNKREGVYQCLCCHQPLFISESKFDSGCGWPSFYQPLDAESIRYIDDYSHNMHRVEIRCGHCDAHLGHVFSDGPQPTGERYCVNSASLNFVDDQNGEQIPG.

Residues Pro-7 to Asp-129 form the MsrB domain. Zn(2+)-binding residues include Cys-46, Cys-49, Cys-95, and Cys-98. The active-site Nucleophile is the Cys-118.

The protein belongs to the MsrB Met sulfoxide reductase family. Zn(2+) serves as cofactor.

The catalysed reaction is L-methionyl-[protein] + [thioredoxin]-disulfide + H2O = L-methionyl-(R)-S-oxide-[protein] + [thioredoxin]-dithiol. The chain is Peptide methionine sulfoxide reductase MsrB from Yersinia enterocolitica serotype O:8 / biotype 1B (strain NCTC 13174 / 8081).